Reading from the N-terminus, the 386-residue chain is Succinate--CoA ligase [ADP-forming] subunit beta (386 aa).

Positions 9–244 (KAILRSYGVS…LDEEDPKEIE (236 aa)) constitute an ATP-grasp domain. ATP contacts are provided by residues Lys46, 53 to 55 (GRG), Glu99, Cys102, and Glu107. Positions 199 and 213 each coordinate Mg(2+). Residues Asn264 and 321 to 323 (GIM) contribute to the substrate site.

This sequence belongs to the succinate/malate CoA ligase beta subunit family. In terms of assembly, heterotetramer of two alpha and two beta subunits. Mg(2+) is required as a cofactor.

The enzyme catalyses succinate + ATP + CoA = succinyl-CoA + ADP + phosphate. The catalysed reaction is GTP + succinate + CoA = succinyl-CoA + GDP + phosphate. It functions in the pathway carbohydrate metabolism; tricarboxylic acid cycle; succinate from succinyl-CoA (ligase route): step 1/1. In terms of biological role, succinyl-CoA synthetase functions in the citric acid cycle (TCA), coupling the hydrolysis of succinyl-CoA to the synthesis of either ATP or GTP and thus represents the only step of substrate-level phosphorylation in the TCA. The beta subunit provides nucleotide specificity of the enzyme and binds the substrate succinate, while the binding sites for coenzyme A and phosphate are found in the alpha subunit. The chain is Succinate--CoA ligase [ADP-forming] subunit beta from Bacillus cytotoxicus (strain DSM 22905 / CIP 110041 / 391-98 / NVH 391-98).